The primary structure comprises 185 residues: Probable prefoldin subunit 3 (185 aa).

The protein belongs to the prefoldin subunit alpha family. As to quaternary structure, heterohexamer of two PFD-alpha type and four PFD-beta type subunits.

In terms of biological role, binds specifically to cytosolic chaperonin (c-CPN) and transfers target proteins to it. Binds to nascent polypeptide chain and promotes folding in an environment in which there are many competing pathways for nonnative proteins. The sequence is that of Probable prefoldin subunit 3 (pfd-3) from Caenorhabditis elegans.